The chain runs to 263 residues: Trans-2-decenoyl-[acyl-carrier-protein] isomerase (263 aa).

It belongs to the enoyl-CoA hydratase/isomerase family. Homotetramer.

It catalyses the reaction (2E)-decenoyl-[ACP] = (3Z)-decenoyl-[ACP]. Its pathway is lipid metabolism; fatty acid biosynthesis. Its function is as follows. Catalyzes the isomerization of trans-2-decenoyl-ACP to cis-3-decenoyl-ACP. Required for survival at low pH. The chain is Trans-2-decenoyl-[acyl-carrier-protein] isomerase (fabM) from Streptococcus mutans serotype c (strain ATCC 700610 / UA159).